The chain runs to 188 residues: Inosine triphosphate pyrophosphatase (188 aa).

9 to 14 (TGNAKK) is a binding site for ITP. Glu-39 contributes to the Mg(2+) binding site. Residues Lys-51, 67–68 (DT), Lys-84, 143–146 (FGWD), Lys-166, and 171–172 (HR) each bind ITP.

This sequence belongs to the HAM1 NTPase family. As to quaternary structure, homodimer. Mg(2+) is required as a cofactor. Requires Mn(2+) as cofactor.

It localises to the cytoplasm. The enzyme catalyses ITP + H2O = IMP + diphosphate + H(+). It catalyses the reaction dITP + H2O = dIMP + diphosphate + H(+). It carries out the reaction XTP + H2O = XMP + diphosphate + H(+). Its function is as follows. Pyrophosphatase that hydrolyzes non-canonical purine nucleotides such as inosine triphosphate (ITP), deoxyinosine triphosphate (dITP) or xanthosine 5'-triphosphate (XTP) to their respective monophosphate derivatives. The enzyme does not distinguish between the deoxy- and ribose forms. Probably excludes non-canonical purines from RNA and DNA precursor pools, thus preventing their incorporation into RNA and DNA and avoiding chromosomal lesions. This Anopheles gambiae (African malaria mosquito) protein is Inosine triphosphate pyrophosphatase.